A 263-amino-acid chain; its full sequence is NAD(P)H-quinone oxidoreductase subunit K, chloroplastic (263 aa).

4 residues coordinate [4Fe-4S] cluster: C64, C65, C129, and C160.

The protein belongs to the complex I 20 kDa subunit family. In terms of assembly, NDH is composed of at least 16 different subunits, 5 of which are encoded in the nucleus. [4Fe-4S] cluster is required as a cofactor.

Its subcellular location is the plastid. It is found in the chloroplast thylakoid membrane. It carries out the reaction a plastoquinone + NADH + (n+1) H(+)(in) = a plastoquinol + NAD(+) + n H(+)(out). The catalysed reaction is a plastoquinone + NADPH + (n+1) H(+)(in) = a plastoquinol + NADP(+) + n H(+)(out). In terms of biological role, NDH shuttles electrons from NAD(P)H:plastoquinone, via FMN and iron-sulfur (Fe-S) centers, to quinones in the photosynthetic chain and possibly in a chloroplast respiratory chain. The immediate electron acceptor for the enzyme in this species is believed to be plastoquinone. Couples the redox reaction to proton translocation, and thus conserves the redox energy in a proton gradient. This chain is NAD(P)H-quinone oxidoreductase subunit K, chloroplastic (ndhK), found in Huperzia lucidula (Shining clubmoss).